We begin with the raw amino-acid sequence, 386 residues long: Protein U3 (386 aa).

In Human herpesvirus 6B (strain Z29) (HHV-6 variant B), this protein is Protein U3 (U3).